The chain runs to 433 residues: Dihydroorotase (433 aa).

Zn(2+) contacts are provided by His-63 and His-65. Residues His-65–Arg-67 and Asn-97 contribute to the substrate site. Zn(2+) is bound by residues Asp-155, His-182, and His-235. Asn-283 is a substrate binding site. Asp-310 contacts Zn(2+). Asp-310 is a catalytic residue. His-314 contacts substrate.

This sequence belongs to the metallo-dependent hydrolases superfamily. DHOase family. Class I DHOase subfamily. The cofactor is Zn(2+).

The enzyme catalyses (S)-dihydroorotate + H2O = N-carbamoyl-L-aspartate + H(+). The protein operates within pyrimidine metabolism; UMP biosynthesis via de novo pathway; (S)-dihydroorotate from bicarbonate: step 3/3. Functionally, catalyzes the reversible cyclization of carbamoyl aspartate to dihydroorotate. In Anaeromyxobacter dehalogenans (strain 2CP-C), this protein is Dihydroorotase.